The chain runs to 126 residues: Large ribosomal subunit protein bL12 (126 aa).

It belongs to the bacterial ribosomal protein bL12 family. Homodimer. Part of the ribosomal stalk of the 50S ribosomal subunit. Forms a multimeric L10(L12)X complex, where L10 forms an elongated spine to which 2 to 4 L12 dimers bind in a sequential fashion. Binds GTP-bound translation factors.

In terms of biological role, forms part of the ribosomal stalk which helps the ribosome interact with GTP-bound translation factors. Is thus essential for accurate translation. The protein is Large ribosomal subunit protein bL12 of Prosthecochloris aestuarii (strain DSM 271 / SK 413).